The following is a 481-amino-acid chain: Aspartyl/glutamyl-tRNA(Asn/Gln) amidotransferase subunit B (481 aa).

This sequence belongs to the GatB/GatE family. GatB subfamily. As to quaternary structure, heterotrimer of A, B and C subunits.

The enzyme catalyses L-glutamyl-tRNA(Gln) + L-glutamine + ATP + H2O = L-glutaminyl-tRNA(Gln) + L-glutamate + ADP + phosphate + H(+). It carries out the reaction L-aspartyl-tRNA(Asn) + L-glutamine + ATP + H2O = L-asparaginyl-tRNA(Asn) + L-glutamate + ADP + phosphate + 2 H(+). In terms of biological role, allows the formation of correctly charged Asn-tRNA(Asn) or Gln-tRNA(Gln) through the transamidation of misacylated Asp-tRNA(Asn) or Glu-tRNA(Gln) in organisms which lack either or both of asparaginyl-tRNA or glutaminyl-tRNA synthetases. The reaction takes place in the presence of glutamine and ATP through an activated phospho-Asp-tRNA(Asn) or phospho-Glu-tRNA(Gln). The chain is Aspartyl/glutamyl-tRNA(Asn/Gln) amidotransferase subunit B from Teredinibacter turnerae (strain ATCC 39867 / T7901).